The primary structure comprises 194 residues: Peptidyl-tRNA hydrolase (194 aa).

TRNA is bound at residue Tyr16. The active-site Proton acceptor is His21. TRNA-binding residues include Phe67, Asn69, and Asn115.

This sequence belongs to the PTH family. As to quaternary structure, monomer.

It localises to the cytoplasm. It catalyses the reaction an N-acyl-L-alpha-aminoacyl-tRNA + H2O = an N-acyl-L-amino acid + a tRNA + H(+). Its function is as follows. Hydrolyzes ribosome-free peptidyl-tRNAs (with 1 or more amino acids incorporated), which drop off the ribosome during protein synthesis, or as a result of ribosome stalling. Catalyzes the release of premature peptidyl moieties from peptidyl-tRNA molecules trapped in stalled 50S ribosomal subunits, and thus maintains levels of free tRNAs and 50S ribosomes. The sequence is that of Peptidyl-tRNA hydrolase from Shigella boydii serotype 18 (strain CDC 3083-94 / BS512).